Consider the following 407-residue polypeptide: Extracellular superoxide dismutase [Cu-Zn] 3 (407 aa).

The first 19 residues, 1–19 (MRLLSVLVFLISVISIAKA), serve as a signal peptide directing secretion. The Extracellular segment spans residues 20-386 (DYQYAFCKFN…SESYNDNEPG (367 aa)). N-linked (GlcNAc...) asparagine glycans are attached at residues Asn51, Asn205, and Asn224. Residues His245 and His247 each coordinate Cu cation. Asn256 carries an N-linked (GlcNAc...) asparagine glycan. A Cu cation-binding site is contributed by His263. 4 residues coordinate Zn(2+): His263, His271, His280, and Asp283. Residue His320 participates in Cu cation binding. 2 N-linked (GlcNAc...) asparagine glycosylation sites follow: Asn321 and Asn364. Residues 387-406 (SSSTVIPFFALIIFSIIFAL) form a helical membrane-spanning segment. Position 407 (Leu407) is a topological domain, cytoplasmic.

It belongs to the Cu-Zn superoxide dismutase family. It depends on Cu cation as a cofactor. Zn(2+) is required as a cofactor.

It is found in the cell membrane. It catalyses the reaction 2 superoxide + 2 H(+) = H2O2 + O2. Protect the extracellular space from toxic effect of reactive oxygen intermediates by converting superoxyde radicals into hydrogen peroxyde and oxygen. The protein is Extracellular superoxide dismutase [Cu-Zn] 3 (sodC) of Dictyostelium discoideum (Social amoeba).